Here is a 122-residue protein sequence, read N- to C-terminus: Ribosome-binding factor A (122 aa).

Belongs to the RbfA family. Monomer. Binds 30S ribosomal subunits, but not 50S ribosomal subunits or 70S ribosomes.

The protein resides in the cytoplasm. One of several proteins that assist in the late maturation steps of the functional core of the 30S ribosomal subunit. Associates with free 30S ribosomal subunits (but not with 30S subunits that are part of 70S ribosomes or polysomes). Required for efficient processing of 16S rRNA. May interact with the 5'-terminal helix region of 16S rRNA. This chain is Ribosome-binding factor A, found in Dichelobacter nodosus (strain VCS1703A).